Here is a 196-residue protein sequence, read N- to C-terminus: Vascular-related unknown protein 2 (196 aa).

Positions 84–130 (ANNINTNPKKRRIIHQHKEEEEEELQKGEEEEEDEEDTASSPSNKTK) are disordered. Acidic residues predominate over residues 103–121 (EEEEELQKGEEEEEDEEDT).

Functionally, involved in the regulation of plant growth. In Arabidopsis thaliana (Mouse-ear cress), this protein is Vascular-related unknown protein 2.